Consider the following 250-residue polypeptide: 5'-nucleotidase SurE (250 aa).

The a divalent metal cation site is built by Asp-9, Asp-10, Ser-40, and Asn-92.

Belongs to the SurE nucleotidase family. The cofactor is a divalent metal cation.

The protein resides in the cytoplasm. The catalysed reaction is a ribonucleoside 5'-phosphate + H2O = a ribonucleoside + phosphate. In terms of biological role, nucleotidase that shows phosphatase activity on nucleoside 5'-monophosphates. The protein is 5'-nucleotidase SurE of Idiomarina loihiensis (strain ATCC BAA-735 / DSM 15497 / L2-TR).